We begin with the raw amino-acid sequence, 249 residues long: Exosome complex component Rrp4 (249 aa).

Positions 73–144 (NDIVIGLVED…RSIDPVLSVK (72 aa)) constitute an S1 motif domain. The KH domain maps to 154-211 (GIVIDIMPVKVPRVIGKNKSMYETLTSKSGCSIFVANNGRIWATCPSRFSEEILIEAI).

The protein belongs to the RRP4 family. In terms of assembly, component of the archaeal exosome complex. Forms a trimer of Rrp4 and/or Csl4 subunits. The trimer associates with a hexameric ring-like arrangement composed of 3 Rrp41-Rrp42 heterodimers.

The protein resides in the cytoplasm. In terms of biological role, non-catalytic component of the exosome, which is a complex involved in RNA degradation. Increases the RNA binding and the efficiency of RNA degradation. Confers strong poly(A) specificity to the exosome. In Saccharolobus solfataricus (strain ATCC 35092 / DSM 1617 / JCM 11322 / P2) (Sulfolobus solfataricus), this protein is Exosome complex component Rrp4.